Here is a 213-residue protein sequence, read N- to C-terminus: T-cell surface glycoprotein CD8 beta chain (213 aa).

The first 21 residues, 1–21 (MQPWLWLVFSMKLAALWSSSA), serve as a signal peptide directing secretion. The Ig-like V-type domain maps to 22–133 (LIQTPSSLLV…KMVFGTGTKL (112 aa)). Topologically, residues 22 to 175 (LIQTPSSLLV…QKGLTCSLTT (154 aa)) are extracellular. A glycan (N-linked (GlcNAc...) asparagine) is linked at N34. C41 and C117 form a disulfide bridge. Residues 176–196 (LSLLVVCILLLLAFLGVAVYF) traverse the membrane as a helical segment. Residues 197-213 (YCVRRRARIHFMKQFHK) lie on the Cytoplasmic side of the membrane.

As to quaternary structure, forms disulfide-linked heterodimers with CD8A at the cell surface. Interacts with CD3D; this interaction couples TCR-CD3 with CD8. Interacts with LCK. Palmitoylated at the cytoplasmic tail and thereby targets the heterodimer CD8A/CD8B to lipid rafts unlike CD8A homodimers.

It localises to the membrane. Its function is as follows. Integral membrane glycoprotein that plays an essential role in the immune response and serves multiple functions in responses against both external and internal offenses. In T-cells, functions primarily as a coreceptor for MHC class I molecule:peptide complex. The antigens presented by class I peptides are derived from cytosolic proteins while class II derived from extracellular proteins. Interacts simultaneously with the T-cell receptor (TCR) and the MHC class I proteins presented by antigen presenting cells (APCs). In turn, recruits the Src kinase LCK to the vicinity of the TCR-CD3 complex. A palmitoylation site in the cytoplasmic tail of CD8B chain contributes to partitioning of CD8 into the plasma membrane lipid rafts where signaling proteins are enriched. Once LCK recruited, it initiates different intracellular signaling pathways by phosphorylating various substrates ultimately leading to lymphokine production, motility, adhesion and activation of cytotoxic T-lymphocytes (CTLs). Additionally, plays a critical role in thymic selection of CD8+ T-cells. The protein is T-cell surface glycoprotein CD8 beta chain (Cd8b) of Mus musculus (Mouse).